We begin with the raw amino-acid sequence, 419 residues long: UDP-N-acetylglucosamine 1-carboxyvinyltransferase (419 aa).

A phosphoenolpyruvate-binding site is contributed by 22–23 (KN). Residue arginine 91 coordinates UDP-N-acetyl-alpha-D-glucosamine. Cysteine 115 serves as the catalytic Proton donor. A 2-(S-cysteinyl)pyruvic acid O-phosphothioketal modification is found at cysteine 115. UDP-N-acetyl-alpha-D-glucosamine contacts are provided by residues 120-124 (RPVDL), 160-163 (KVSV), aspartate 305, and isoleucine 327.

Belongs to the EPSP synthase family. MurA subfamily.

The protein resides in the cytoplasm. It catalyses the reaction phosphoenolpyruvate + UDP-N-acetyl-alpha-D-glucosamine = UDP-N-acetyl-3-O-(1-carboxyvinyl)-alpha-D-glucosamine + phosphate. It functions in the pathway cell wall biogenesis; peptidoglycan biosynthesis. Its function is as follows. Cell wall formation. Adds enolpyruvyl to UDP-N-acetylglucosamine. This chain is UDP-N-acetylglucosamine 1-carboxyvinyltransferase, found in Tolumonas auensis (strain DSM 9187 / NBRC 110442 / TA 4).